A 198-amino-acid chain; its full sequence is Transcriptional regulator GfcR (198 aa).

Belongs to the purine/pyrimidine phosphoribosyltransferase family. GfcR subfamily.

The protein is Transcriptional regulator GfcR of Methanospirillum hungatei JF-1 (strain ATCC 27890 / DSM 864 / NBRC 100397 / JF-1).